Here is a 325-residue protein sequence, read N- to C-terminus: 4-hydroxy-3-methylbut-2-enyl diphosphate reductase (325 aa).

[4Fe-4S] cluster is bound at residue cysteine 25. (2E)-4-hydroxy-3-methylbut-2-enyl diphosphate is bound by residues histidine 54 and histidine 87. The dimethylallyl diphosphate site is built by histidine 54 and histidine 87. Isopentenyl diphosphate-binding residues include histidine 54 and histidine 87. Cysteine 109 provides a ligand contact to [4Fe-4S] cluster. Histidine 137 serves as a coordination point for (2E)-4-hydroxy-3-methylbut-2-enyl diphosphate. Histidine 137 lines the dimethylallyl diphosphate pocket. Residue histidine 137 coordinates isopentenyl diphosphate. The Proton donor role is filled by glutamate 139. Threonine 179 lines the (2E)-4-hydroxy-3-methylbut-2-enyl diphosphate pocket. Cysteine 209 lines the [4Fe-4S] cluster pocket. Positions 237, 238, 239, and 282 each coordinate (2E)-4-hydroxy-3-methylbut-2-enyl diphosphate. Residues serine 237, serine 238, asparagine 239, and serine 282 each contribute to the dimethylallyl diphosphate site. Serine 237, serine 238, asparagine 239, and serine 282 together coordinate isopentenyl diphosphate.

The protein belongs to the IspH family. It depends on [4Fe-4S] cluster as a cofactor.

The enzyme catalyses isopentenyl diphosphate + 2 oxidized [2Fe-2S]-[ferredoxin] + H2O = (2E)-4-hydroxy-3-methylbut-2-enyl diphosphate + 2 reduced [2Fe-2S]-[ferredoxin] + 2 H(+). It catalyses the reaction dimethylallyl diphosphate + 2 oxidized [2Fe-2S]-[ferredoxin] + H2O = (2E)-4-hydroxy-3-methylbut-2-enyl diphosphate + 2 reduced [2Fe-2S]-[ferredoxin] + 2 H(+). It functions in the pathway isoprenoid biosynthesis; dimethylallyl diphosphate biosynthesis; dimethylallyl diphosphate from (2E)-4-hydroxy-3-methylbutenyl diphosphate: step 1/1. It participates in isoprenoid biosynthesis; isopentenyl diphosphate biosynthesis via DXP pathway; isopentenyl diphosphate from 1-deoxy-D-xylulose 5-phosphate: step 6/6. Catalyzes the conversion of 1-hydroxy-2-methyl-2-(E)-butenyl 4-diphosphate (HMBPP) into a mixture of isopentenyl diphosphate (IPP) and dimethylallyl diphosphate (DMAPP). Acts in the terminal step of the DOXP/MEP pathway for isoprenoid precursor biosynthesis. This is 4-hydroxy-3-methylbut-2-enyl diphosphate reductase from Corynebacterium glutamicum (strain ATCC 13032 / DSM 20300 / JCM 1318 / BCRC 11384 / CCUG 27702 / LMG 3730 / NBRC 12168 / NCIMB 10025 / NRRL B-2784 / 534).